A 112-amino-acid chain; its full sequence is MLRKIKVTFIINDEEERTVEAPIGLSILEIAHSNDLDLEGACEGSLACATCHVMLEEEFYNKLKKPTEAEEDMLDLAFGLTDTSRLGCQIILTEELDGIKVRLPSATRNIKL.

The 103-residue stretch at 5–107 (IKVTFIINDE…GIKVRLPSAT (103 aa)) folds into the 2Fe-2S ferredoxin-type domain. [2Fe-2S] cluster is bound by residues Cys-42, Cys-48, Cys-51, and Cys-88.

This sequence belongs to the adrenodoxin/putidaredoxin family. It depends on [2Fe-2S] cluster as a cofactor.

Ferredoxin are iron-sulfur proteins that transfer electrons in a wide variety of metabolic reactions. The chain is 2Fe-2S ferredoxin (fdxB) from Rickettsia prowazekii (strain Madrid E).